We begin with the raw amino-acid sequence, 591 residues long: Inactive metallocarboxypeptidase ECM14 (591 aa).

The first 21 residues, Met1 to Ala21, serve as a signal peptide directing secretion. A propeptide spanning residues Ile22–Ser175 is cleaved from the precursor. The region spanning Asp203–Leu523 is the Peptidase M14 domain. Zn(2+) is bound by residues His265 and Glu268. Residues His265–Glu268, Arg323, and Asp340–Arg341 contribute to the substrate site. An intrachain disulfide couples Cys334 to Cys357. N-linked (GlcNAc...) asparagine glycans are attached at residues Asn350, Asn381, and Asn386. His397 is a binding site for Zn(2+). Ser398–Tyr399 contacts substrate. Residues Asp533–Arg591 form a disordered region. Acidic residues-rich tracts occupy residues Asp544 to Asp559 and Asn573 to Glu582.

Belongs to the peptidase M14 family. Zn(2+) serves as cofactor.

The protein localises to the vacuole. It is found in the secreted. Its function is as follows. Inactive carboxypeptidase that may play a role in cell wall organization and biogenesis. The protein is Inactive metallocarboxypeptidase ECM14 (ECM14) of Paracoccidioides brasiliensis (strain Pb18).